The primary structure comprises 33 residues: Protamine-2C (33 aa).

Positions 1 to 33 (MPRRRRSSRRPVRRRRRPRVSRRRRRRGGRRRR) are disordered.

As to expression, testis.

It is found in the nucleus. It localises to the chromosome. Protamines substitute for histones in the chromatin of sperm during the haploid phase of spermatogenesis. They compact sperm DNA into a highly condensed, stable and inactive complex. This Oncorhynchus mykiss (Rainbow trout) protein is Protamine-2C.